We begin with the raw amino-acid sequence, 629 residues long: Proteoglycan Cow (629 aa).

A signal peptide spans 1 to 27 (MKHSPLIASACLALVLMSSSLIGSTEA). 2 disordered regions span residues 118 to 186 (KRRV…ESKE) and 198 to 223 (GDKQ…DDDE). Residues 128 to 143 (DSQDAEDINNDDEDNS) are compositionally biased toward acidic residues. An N-linked (GlcNAc...) asparagine glycan is attached at Asn142. Over residues 144–159 (SDGGSSNSSPTGTNNA) the composition is skewed to low complexity. Residues 167–186 (EETDDEDKSLSLGDDDESKE) are compositionally biased toward acidic residues. Positions 222–273 (DEELDNCKPCPVAKPTFLCGADNRTYSSLCRLDYHNCIHSTSIRIACKGFCP) constitute a Kazal-like domain. 3 cysteine pairs are disulfide-bonded: Cys228/Cys258, Cys231/Cys251, and Cys240/Cys272. A glycan (N-linked (GlcNAc...) asparagine) is linked at Asn244. The disordered stretch occupies residues 298 to 356 (SLDQQQQQQQQQQQQQQQQQAYKDSNNNNIMMNSGNIMGGNNNDFNTIMNDKEDNNRHN). Over residues 301-340 (QQQQQQQQQQQQQQQQQAYKDSNNNNIMMNSGNIMGGNNN) the composition is skewed to low complexity. EF-hand domains are found at residues 468–503 (ACKT…QNER) and 508–535 (FIDT…TDRP). 5 residues coordinate Ca(2+): Asp481, Asn483, Asp485, Gln487, and Glu492. The Thyroglobulin type-1 domain occupies 533-594 (DRPCAAVRRR…NTRTRGKPNC (62 aa)). 3 cysteine pairs are disulfide-bonded: Cys536–Cys555, Cys566–Cys573, and Cys575–Cys594. Positions 602–629 (ASLTSDDEDEGADDEDSAEGSADQMLVF) are disordered. The span at 606-619 (SDDEDEGADDEDSA) shows a compositional bias: acidic residues. Residues 620–629 (EGSADQMLVF) show a composition bias toward low complexity.

In terms of assembly, interacts (in heparan sulfate-bound form) with wg. Contains heparan sulfate O-linked oligosaccharides. As to expression, in the wing disk, detected throughout the disk where it is localized primarily to the apical surface but is also present at the basal surface (at protein level).

Its subcellular location is the secreted. Its function is as follows. Binds to the Wnt signaling protein wg, stabilizes it and promotes its extracellular distribution. This is required for establishment of a wg gradient during development to allow for regulation of target genes at different levels. In Drosophila melanogaster (Fruit fly), this protein is Proteoglycan Cow.